The primary structure comprises 602 residues: Solute carrier organic anion transporter family member 1C1 (602 aa).

Topologically, residues 1-43 (MDTSSKENIQLFCKTSVQPVGRPSFKTEYPSSEEKQPCCGELK) are cytoplasmic. Residues 44–63 (VFLGALSFVYFAKALAEGYL) traverse the membrane as a helical segment. At 64–82 (KSTITQIERRFDIPSSLVG) the chain is on the extracellular side. The chain crosses the membrane as a helical span at residues 83 to 103 (VIDGSFEIGNLLVITFVSYFG). Residues 104 to 109 (AKLHRP) lie on the Cytoplasmic side of the membrane. Residues 110–134 (KIIGAGCLIMGVGTLLIAMPQFFME) form a helical membrane-spanning segment. Topologically, residues 135–139 (QYKYE) are extracellular. The helical transmembrane segment at 140–156 (IYSPSSNSTLSISPCLL) threads the bilayer. The Cytoplasmic portion of the chain corresponds to 157 to 238 (ESSSQLPVSV…ARDFLPSLKY (82 aa)). Residues 190-216 (PRSQSREDSNSSSEKSKFIRDDHTDYQ) are disordered. A compositionally biased stretch (basic and acidic residues) spans 193-214 (QSREDSNSSSEKSKFIRDDHTD). Residues 239–260 (LFGNPVYFLYLCTSTVQFNSLF) form a helical membrane-spanning segment. The Extracellular portion of the chain corresponds to 261-280 (GMVTYKPKYIEQQYGQSSSR). Residues 281–304 (ANFVIGLINIPAVALGIFSGGIAM) form a helical membrane-spanning segment. The Cytoplasmic segment spans residues 305-308 (KKFR). Residues 309–332 (ISVCGAAKLYLGSSVFGYLLFLSL) traverse the membrane as a helical segment. The Extracellular portion of the chain corresponds to 333 to 444 (FALGCENSDV…NGCPQMFLYF (112 aa)). A Kazal-like domain is found at 360–415 (RALFSDCNPRCKCSETKWEPMCGENGITYVSACPAGCQTSNRSGKNIIFYNCTCVG). 3 disulfides stabilise this stretch: C366–C396, C372–C392, and C381–C413. 3 N-linked (GlcNAc...) asparagine glycosylation sites follow: N400, N410, and N423. A helical transmembrane segment spans residues 445–467 (LVISVITSYTLSLGGIPGYILLL). Residues 468–476 (RCIKPQLKS) are Cytoplasmic-facing. A helical transmembrane segment spans residues 477-502 (FALGIYTLSIRVLAGIPAPVYFGVLI). At 503–536 (DTSCLKWGFKRCGSRGSCRLYDSNVFRHIYLGLT) the chain is on the extracellular side. Residues 537 to 554 (VILGTVSIFLSIAVLFIL) form a helical membrane-spanning segment. The Cytoplasmic segment spans residues 555–602 (KKNYVSKHRNFITKRERTMVSTRFQKENCTTSDHLLQPKYWPGKETQL).

The protein belongs to the organo anion transporter (TC 2.A.60) family.

The protein resides in the cell membrane. It catalyses the reaction 3,3',5'-triiodo-L-thyronine(out) = 3,3',5'-triiodo-L-thyronine(in). The catalysed reaction is L-thyroxine(out) = L-thyroxine(in). It carries out the reaction L-thyroxine sulfate(out) = L-thyroxine sulfate(in). Mediates the Na(+)-independent high affinity transport of organic anions such as the thyroid hormones L-thyroxine (T4), L-thyroxine sulfate (T4S), and 3,3',5'-triiodo-L-thyronine (reverse T3, rT3) at the plasma membrane. Regulates T4 levels in different brain regions by transporting T4, and also by serving as an export pump for T4S, which is a source of T4 after hydrolysis by local sulfatases. Increases the access of these substrates to the intracellular sites where they are metabolized by the deiodinases. Other potential substrates, such as triiodothyronine (T3), 17-beta-glucuronosyl estradiol (17beta-estradiol 17-O-(beta-D-glucuronate)), estrone-3-sulfate (E1S) and sulfobromophthalein (BSP) are transported with much lower efficiency. Transports T4 and E1S in a pH-insensitive manner. Facilitates the transport of thyroid hormones across the blood-brain barrier and into glia and neuronal cells in the brain. In Macaca fascicularis (Crab-eating macaque), this protein is Solute carrier organic anion transporter family member 1C1 (SLCO1C1).